The following is a 300-amino-acid chain: GTP-binding protein At2g22870 (300 aa).

The EngB-type G domain maps to 119 to 297 (DRPEIAILGR…LLHMSQLRNY (179 aa)). Residues 127–134 (GRSNVGKS), 154–158 (GKTQL), 172–175 (DLPG), 239–242 (TKCD), and 276–278 (TSS) contribute to the GTP site. Residues serine 134 and threonine 156 each contribute to the Mg(2+) site.

It belongs to the TRAFAC class TrmE-Era-EngA-EngB-Septin-like GTPase superfamily. EngB GTPase family. Mg(2+) is required as a cofactor.

The polypeptide is GTP-binding protein At2g22870 (EMB2001) (Arabidopsis thaliana (Mouse-ear cress)).